The sequence spans 535 residues: GMP synthase [glutamine-hydrolyzing] (535 aa).

The Glutamine amidotransferase type-1 domain occupies 24–217; sequence KILIVDFGSQ…VRNISGLGGD (194 aa). Residue cysteine 101 is the Nucleophile of the active site. Residues histidine 191 and glutamate 193 contribute to the active site. A GMPS ATP-PPase domain is found at 218–410; that stretch reads WTMHAFREEE…LGLPDVFVGR (193 aa). 245 to 251 is a binding site for ATP; the sequence is SGGVDSA.

Homodimer.

It catalyses the reaction XMP + L-glutamine + ATP + H2O = GMP + L-glutamate + AMP + diphosphate + 2 H(+). It participates in purine metabolism; GMP biosynthesis; GMP from XMP (L-Gln route): step 1/1. In terms of biological role, catalyzes the synthesis of GMP from XMP. In Bradyrhizobium sp. (strain ORS 278), this protein is GMP synthase [glutamine-hydrolyzing].